The primary structure comprises 232 residues: Phosphoadenosine 5'-phosphosulfate reductase (232 aa).

Catalysis depends on Cys-228, which acts as the Nucleophile; cysteine thiosulfonate intermediate.

It belongs to the PAPS reductase family. CysH subfamily.

It localises to the cytoplasm. The enzyme catalyses [thioredoxin]-disulfide + sulfite + adenosine 3',5'-bisphosphate + 2 H(+) = [thioredoxin]-dithiol + 3'-phosphoadenylyl sulfate. Its pathway is sulfur metabolism; hydrogen sulfide biosynthesis; sulfite from sulfate: step 3/3. In terms of biological role, catalyzes the formation of sulfite from phosphoadenosine 5'-phosphosulfate (PAPS) using thioredoxin as an electron donor. In Synechococcus sp. (strain ATCC 27144 / PCC 6301 / SAUG 1402/1) (Anacystis nidulans), this protein is Phosphoadenosine 5'-phosphosulfate reductase.